Here is a 196-residue protein sequence, read N- to C-terminus: Signal peptidase complex catalytic subunit SEC11 (196 aa).

At methionine 1–glutamine 14 the chain is on the cytoplasmic side. A helical; Signal-anchor for type II membrane protein transmembrane segment spans residues threonine 15–tryptophan 33. Residues lysine 34–glutamate 196 are Lumenal-facing. Active-site charge relay system residues include serine 53 and histidine 92. Residues valine 101 to asparagine 133 are disordered. The span at serine 118 to asparagine 133 shows a compositional bias: polar residues. Asparagine 134 carries N-linked (GlcNAc...) asparagine glycosylation. Aspartate 138 (charge relay system) is an active-site residue. Positions valine 182–leucine 193 are C-terminal short (CTS) helix.

The protein belongs to the peptidase S26B family. In terms of assembly, component of the signal peptidase complex (SPC) composed of a catalytic subunit SEC11 and three accessory subunits SPC1, SPC2 and SPC3. The complex induces a local thinning of the ER membrane which is used to measure the length of the signal peptide (SP) h-region of protein substrates. This ensures the selectivity of the complex towards h-regions shorter than 18-20 amino acids. SPC associates with the translocon complex.

The protein resides in the endoplasmic reticulum membrane. It catalyses the reaction Cleavage of hydrophobic, N-terminal signal or leader sequences from secreted and periplasmic proteins.. Catalytic component of the signal peptidase complex (SPC) which catalyzes the cleavage of N-terminal signal sequences from nascent proteins as they are translocated into the lumen of the endoplasmic reticulum. Specifically cleaves N-terminal signal peptides that contain a hydrophobic alpha-helix (h-region) shorter than 18-20 amino acids. The sequence is that of Signal peptidase complex catalytic subunit SEC11 (SEC11) from Ajellomyces dermatitidis (strain ER-3 / ATCC MYA-2586) (Blastomyces dermatitidis).